We begin with the raw amino-acid sequence, 578 residues long: Thiol:disulfide interchange protein DsbD (578 aa).

The signal sequence occupies residues 1 to 24; that stretch reads MAQRFITLILLLCSILLAPHSAQA. 2 cysteine pairs are disulfide-bonded: Cys-134–Cys-140 and Cys-195–Cys-317. 9 helical membrane-spanning segments follow: residues 183-203, 219-239, 256-276, 297-317, 318-338, 339-359, 370-390, 397-417, and 421-441; these read ALLIGIGIAFTPCVLPMYPLI, ILLLAIVYVQGMALTYTLLGL, YVLIGLSALFVLLALSMFGLY, GGSLAGVFAMGALAGLICSPC, TTAPLSAILLYIAQSGNMLAG, GGTLYLYALGMGIPLVIVTLF, WMQYVKEAFGFVILALPVFLL, VWGLRLWSLLAIAFFGWAFIL, and AHSGWARAFQLLLLAALLIAA. Residues 438 to 578 enclose the Thioredoxin domain; the sequence is LIAARPLQDW…FLQHLQNLPR (141 aa). A disulfide bond links Cys-493 and Cys-496.

The protein belongs to the thioredoxin family. DsbD subfamily.

It localises to the cell inner membrane. It carries out the reaction [protein]-dithiol + NAD(+) = [protein]-disulfide + NADH + H(+). The enzyme catalyses [protein]-dithiol + NADP(+) = [protein]-disulfide + NADPH + H(+). Required to facilitate the formation of correct disulfide bonds in some periplasmic proteins and for the assembly of the periplasmic c-type cytochromes. Acts by transferring electrons from cytoplasmic thioredoxin to the periplasm. This transfer involves a cascade of disulfide bond formation and reduction steps. This chain is Thiol:disulfide interchange protein DsbD, found in Yersinia enterocolitica serotype O:8 / biotype 1B (strain NCTC 13174 / 8081).